A 251-amino-acid chain; its full sequence is Ubiquinone/menaquinone biosynthesis C-methyltransferase UbiE (251 aa).

S-adenosyl-L-methionine is bound by residues Thr-74, Asp-95, and 123-124 (NA).

It belongs to the class I-like SAM-binding methyltransferase superfamily. MenG/UbiE family.

It catalyses the reaction a 2-demethylmenaquinol + S-adenosyl-L-methionine = a menaquinol + S-adenosyl-L-homocysteine + H(+). The catalysed reaction is a 2-methoxy-6-(all-trans-polyprenyl)benzene-1,4-diol + S-adenosyl-L-methionine = a 5-methoxy-2-methyl-3-(all-trans-polyprenyl)benzene-1,4-diol + S-adenosyl-L-homocysteine + H(+). It participates in quinol/quinone metabolism; menaquinone biosynthesis; menaquinol from 1,4-dihydroxy-2-naphthoate: step 2/2. Its pathway is cofactor biosynthesis; ubiquinone biosynthesis. In terms of biological role, methyltransferase required for the conversion of demethylmenaquinol (DMKH2) to menaquinol (MKH2) and the conversion of 2-polyprenyl-6-methoxy-1,4-benzoquinol (DDMQH2) to 2-polyprenyl-3-methyl-6-methoxy-1,4-benzoquinol (DMQH2). The protein is Ubiquinone/menaquinone biosynthesis C-methyltransferase UbiE of Shewanella baltica (strain OS155 / ATCC BAA-1091).